We begin with the raw amino-acid sequence, 117 residues long: Large ribosomal subunit protein uL18 (117 aa).

The protein belongs to the universal ribosomal protein uL18 family. Part of the 50S ribosomal subunit; part of the 5S rRNA/L5/L18/L25 subcomplex. Contacts the 5S and 23S rRNAs.

Functionally, this is one of the proteins that bind and probably mediate the attachment of the 5S RNA into the large ribosomal subunit, where it forms part of the central protuberance. This chain is Large ribosomal subunit protein uL18, found in Azoarcus sp. (strain BH72).